A 149-amino-acid polypeptide reads, in one-letter code: Ribonuclease HI (149 aa).

In terms of domain architecture, RNase H type-1 spans 1-140 (MIIGYFDGLC…AYELVRRGKL (140 aa)). Mg(2+) is bound by residues Asp-7, Glu-52, Asp-76, and Asp-125. Positions 7, 52, 76, and 125 each coordinate Mn(2+). The cysteines at positions 58 and 145 are disulfide-linked.

As to quaternary structure, monomer. The cofactor is Mn(2+). Requires Mg(2+) as cofactor. It depends on Co(2+) as a cofactor. Ni(2+) serves as cofactor. The disulfide bond confers considerable stability to the protein.

It localises to the cytoplasm. It carries out the reaction Endonucleolytic cleavage to 5'-phosphomonoester.. Functionally, nuclease that specifically degrades the RNA of RNA-DNA hybrids. Endonucleolytically removes RNA primers from the Okazaki fragments of lagging strand synthesis on its own. In the presence of Mn(2+) or Co(2+) can also cleave an RNA-RNA hybrid; the dsRNase activity is 10- 100-fold lower than RNase H activity. Complements the temperature-sensitive phenotype of an E.coli double rnhA/rnhB (RNase H) disruption mutant. This Sulfurisphaera tokodaii (strain DSM 16993 / JCM 10545 / NBRC 100140 / 7) (Sulfolobus tokodaii) protein is Ribonuclease HI (rnhA).